We begin with the raw amino-acid sequence, 102 residues long: Monothiol glutaredoxin-S8 (102 aa).

The region spanning 1–101 (MEKIQKMISE…PMLKRFGALW (101 aa)) is the Glutaredoxin domain. Position 21 (Cys-21) interacts with [2Fe-2S] cluster. The short motif at 99-102 (ALWL) is the Responsive for interaction with TGA factors element.

This sequence belongs to the glutaredoxin family. CC-type subfamily.

The protein localises to the cytoplasm. It is found in the nucleus. In terms of biological role, may only reduce GSH-thiol disulfides, but not protein disulfides. The chain is Monothiol glutaredoxin-S8 (GRXS8) from Arabidopsis thaliana (Mouse-ear cress).